Consider the following 488-residue polypeptide: Probable malate:quinone oxidoreductase (488 aa).

The protein belongs to the MQO family. Requires FAD as cofactor.

It carries out the reaction (S)-malate + a quinone = a quinol + oxaloacetate. The protein operates within carbohydrate metabolism; tricarboxylic acid cycle; oxaloacetate from (S)-malate (quinone route): step 1/1. This is Probable malate:quinone oxidoreductase from Neisseria meningitidis serogroup A / serotype 4A (strain DSM 15465 / Z2491).